Here is a 612-residue protein sequence, read N- to C-terminus: Dihydroxy-acid dehydratase (612 aa).

Asp81 is a binding site for Mg(2+). Cys122 is a binding site for [2Fe-2S] cluster. Mg(2+) contacts are provided by Asp123 and Lys124. Lys124 carries the N6-carboxylysine modification. Residue Cys196 participates in [2Fe-2S] cluster binding. Glu492 serves as a coordination point for Mg(2+). Ser518 acts as the Proton acceptor in catalysis.

The protein belongs to the IlvD/Edd family. As to quaternary structure, homodimer. [2Fe-2S] cluster is required as a cofactor. Requires Mg(2+) as cofactor.

It catalyses the reaction (2R)-2,3-dihydroxy-3-methylbutanoate = 3-methyl-2-oxobutanoate + H2O. The catalysed reaction is (2R,3R)-2,3-dihydroxy-3-methylpentanoate = (S)-3-methyl-2-oxopentanoate + H2O. The protein operates within amino-acid biosynthesis; L-isoleucine biosynthesis; L-isoleucine from 2-oxobutanoate: step 3/4. Its pathway is amino-acid biosynthesis; L-valine biosynthesis; L-valine from pyruvate: step 3/4. Functions in the biosynthesis of branched-chain amino acids. Catalyzes the dehydration of (2R,3R)-2,3-dihydroxy-3-methylpentanoate (2,3-dihydroxy-3-methylvalerate) into 2-oxo-3-methylpentanoate (2-oxo-3-methylvalerate) and of (2R)-2,3-dihydroxy-3-methylbutanoate (2,3-dihydroxyisovalerate) into 2-oxo-3-methylbutanoate (2-oxoisovalerate), the penultimate precursor to L-isoleucine and L-valine, respectively. The sequence is that of Dihydroxy-acid dehydratase from Cereibacter sphaeroides (strain ATCC 17029 / ATH 2.4.9) (Rhodobacter sphaeroides).